A 35-amino-acid chain; its full sequence is Dermonecrotic toxin LgSicTox-beta-LOXN4 (35 aa).

Mg(2+) is bound at residue aspartate 20.

Belongs to the arthropod phospholipase D family. Class II subfamily. The cofactor is Mg(2+). Contains 2 disulfide bonds. Expressed by the venom gland.

It localises to the secreted. The catalysed reaction is an N-(acyl)-sphingosylphosphocholine = an N-(acyl)-sphingosyl-1,3-cyclic phosphate + choline. It catalyses the reaction an N-(acyl)-sphingosylphosphoethanolamine = an N-(acyl)-sphingosyl-1,3-cyclic phosphate + ethanolamine. The enzyme catalyses a 1-acyl-sn-glycero-3-phosphocholine = a 1-acyl-sn-glycero-2,3-cyclic phosphate + choline. It carries out the reaction a 1-acyl-sn-glycero-3-phosphoethanolamine = a 1-acyl-sn-glycero-2,3-cyclic phosphate + ethanolamine. Functionally, dermonecrotic toxins cleave the phosphodiester linkage between the phosphate and headgroup of certain phospholipids (sphingolipid and lysolipid substrates), forming an alcohol (often choline) and a cyclic phosphate. This toxin acts on sphingomyelin (SM). It may also act on ceramide phosphoethanolamine (CPE), lysophosphatidylcholine (LPC) and lysophosphatidylethanolamine (LPE), but not on lysophosphatidylserine (LPS), and lysophosphatidylglycerol (LPG). It acts by transphosphatidylation, releasing exclusively cyclic phosphate products as second products. Induces dermonecrosis, hemolysis, increased vascular permeability, edema, inflammatory response, and platelet aggregation. In Loxosceles gaucho (Spider), this protein is Dermonecrotic toxin LgSicTox-beta-LOXN4.